Consider the following 105-residue polypeptide: uncharacterized protein (105 aa).

Positions 1–11 (MPHRNDRRKSA) are enriched in basic residues. Residues 1 to 20 (MPHRNDRRKSASKAPNAIIH) form a disordered region.

It belongs to the ALB1 family.

Its subcellular location is the nucleus. The protein localises to the nucleolus. This is an uncharacterized protein from Schizosaccharomyces pombe (strain 972 / ATCC 24843) (Fission yeast).